A 153-amino-acid polypeptide reads, in one-letter code: Glucose-6-phosphate 1-dehydrogenase (153 aa).

Arg-21 and Lys-120 together coordinate NADP(+). Lys-120 provides a ligand contact to D-glucose 6-phosphate.

This sequence belongs to the glucose-6-phosphate dehydrogenase family.

The protein localises to the cytoplasm. The protein resides in the cytosol. The enzyme catalyses D-glucose 6-phosphate + NADP(+) = 6-phospho-D-glucono-1,5-lactone + NADPH + H(+). Its pathway is carbohydrate degradation; pentose phosphate pathway; D-ribulose 5-phosphate from D-glucose 6-phosphate (oxidative stage): step 1/3. Cytosolic glucose-6-phosphate dehydrogenase that catalyzes the first and rate-limiting step of the oxidative branch within the pentose phosphate pathway/shunt, an alternative route to glycolysis for the dissimilation of carbohydrates and a major source of reducing power and metabolic intermediates for fatty acid and nucleic acid biosynthetic processes. The protein is Glucose-6-phosphate 1-dehydrogenase (ZW) of Sarcophaga bullata (Grey flesh fly).